Reading from the N-terminus, the 507-residue chain is Dihydrolipoyl dehydrogenase 2, mitochondrial (507 aa).

The N-terminal 36 residues, 1–36 (MAMASLARRKAYFLTRNISNSPTDAFRFSFSLTRGF), are a transit peptide targeting the mitochondrion. Residues 73-82 (EKRGALGGTC), Lys-91, Gly-155, and 184-186 (TGS) contribute to the FAD site. Cys-82 and Cys-87 are oxidised to a cystine. Residues 221-228 (GAGYIGLE), Glu-244, Val-278, and Gly-313 contribute to the NAD(+) site. Residues Asp-354 and 360–363 (MLAH) contribute to the FAD site. His-486 functions as the Proton acceptor in the catalytic mechanism.

This sequence belongs to the class-I pyridine nucleotide-disulfide oxidoreductase family. In terms of assembly, homodimer. Part of both the glycine cleavage system composed of four proteins: P, T, L and H and of the pyruvate dehydrogenase complex containing multiple copies of three enzymatic components: pyruvate dehydrogenase (E1), dihydrolipoamide acetyltransferase (E2) and lipoamide dehydrogenase (E3). Requires FAD as cofactor. Post-translationally, S-nytrosylated at unknown positions. In terms of tissue distribution, preferentially expressed in roots, flowers and siliques and at a lower level in stems and leaves.

It localises to the mitochondrion matrix. It carries out the reaction N(6)-[(R)-dihydrolipoyl]-L-lysyl-[protein] + NAD(+) = N(6)-[(R)-lipoyl]-L-lysyl-[protein] + NADH + H(+). Its function is as follows. Lipoamide dehydrogenase is a component of the glycine decarboxylase (GDC) or glycine cleavage system as well as of the alpha-ketoacid dehydrogenase complexes. LPD1 is probably the protein most often associated with the glycine decarboxylase complex while LPD2 is probably incorporated into alpha-ketoacid dehydrogenase complexes. This is Dihydrolipoyl dehydrogenase 2, mitochondrial (LPD2) from Arabidopsis thaliana (Mouse-ear cress).